The following is a 191-amino-acid chain: ECF RNA polymerase sigma factor ShbA (191 aa).

The interval 27–98 (LLAHVHPLAL…HKVADLQRAA (72 aa)) is sigma-70 factor domain-2. A disordered region spans residues 100–122 (RHPGSTAVPSDEMPERPDDSLGP). The span at 112–122 (MPERPDDSLGP) shows a compositional bias: basic and acidic residues. Residues 138-187 (LLANLPENQRELLVLRVAVGLTAEETGQMLGMSPGAVRVAQHRALSRLRA) are sigma-70 factor domain-4. Positions 160–179 (AEETGQMLGMSPGAVRVAQH) form a DNA-binding region, H-T-H motif.

It belongs to the sigma-70 factor family. ECF subfamily.

Functionally, sigma factors are initiation factors that promote the attachment of RNA polymerase to specific initiation sites and are then released. Extracytoplasmic function (ECF) sigma factors are held in an inactive form by an anti-sigma factor until released. This alternative sigma factor governs the transcription of the principal sigma factor HrdB (SigA) throughout growth. Acts by binding to the promoter region. This Streptomyces griseus subsp. griseus (strain JCM 4626 / CBS 651.72 / NBRC 13350 / KCC S-0626 / ISP 5235) protein is ECF RNA polymerase sigma factor ShbA.